The sequence spans 338 residues: Glycerol-3-phosphate dehydrogenase [NAD(P)+] (338 aa).

Residues Ser18, Tyr19, His39, and Lys113 each contribute to the NADPH site. Residues Lys113, Gly142, and Thr144 each contribute to the sn-glycerol 3-phosphate site. Ala146 serves as a coordination point for NADPH. Positions 198, 251, 261, 262, and 263 each coordinate sn-glycerol 3-phosphate. The active-site Proton acceptor is Lys198. Arg262 contributes to the NADPH binding site. Residues Val286 and Glu288 each coordinate NADPH.

Belongs to the NAD-dependent glycerol-3-phosphate dehydrogenase family.

It is found in the cytoplasm. The catalysed reaction is sn-glycerol 3-phosphate + NAD(+) = dihydroxyacetone phosphate + NADH + H(+). The enzyme catalyses sn-glycerol 3-phosphate + NADP(+) = dihydroxyacetone phosphate + NADPH + H(+). Its pathway is membrane lipid metabolism; glycerophospholipid metabolism. In terms of biological role, catalyzes the reduction of the glycolytic intermediate dihydroxyacetone phosphate (DHAP) to sn-glycerol 3-phosphate (G3P), the key precursor for phospholipid synthesis. The chain is Glycerol-3-phosphate dehydrogenase [NAD(P)+] from Photobacterium profundum (strain SS9).